Consider the following 377-residue polypeptide: L-arabinitol 4-dehydrogenase (377 aa).

Zn(2+)-binding residues include Cys66, His91, Glu92, Cys121, Cys124, Cys127, Cys135, and Glu176. Residues 203-204 (PI), Asp224, Arg229, Ile296, and 320-322 (QYR) contribute to the NAD(+) site.

It belongs to the zinc-containing alcohol dehydrogenase family. In terms of assembly, homotetramer. The cofactor is Zn(2+). Post-translationally, the N-terminus is blocked.

The enzyme catalyses L-arabinitol + NAD(+) = L-xylulose + NADH + H(+). Its pathway is carbohydrate degradation; L-arabinose degradation via L-arabinitol; D-xylulose 5-phosphate from L-arabinose (fungal route): step 2/5. Its function is as follows. Catalyzes the NAD-dependent oxidation of L-arabinitol to L-xylulose in the fungal L-arabinose catabolic pathway. L-arabinose catabolism is important for using plant material as a carbon source. Can partially compensate for xylitol dehydrogenase in xdh1 mutants. Also oxidizes galactitol to L-xylo-3-hexulose as an alternative to the standard Leloir pathway for D-galactose metabolism. NADP cannot act as a cosubstrate. This chain is L-arabinitol 4-dehydrogenase (lad1), found in Hypocrea jecorina (Trichoderma reesei).